The primary structure comprises 523 residues: WD repeat-containing protein WDS homolog (523 aa).

Positions 16–48 (KKHEFIRILVQCLYSLGFKNSASCLEFESKILY) constitute a LisH domain. A CTLH domain is found at 49–107 (KTADSEFLEKQVLSGNWDSCVQVLDRIFDNSMDDTRNTALYLVFKQCLLEYLKRGDVSL). WD repeat units follow at residues 222–261 (AHKNEVWFVQFSNSGKYLATASSDCTAIIWKVLDDNKVEL), 267–306 (SHQNPVSFVSWSPDDTKLLTCGNAEVLKLWDVDTGVLRHT), 310–353 (NNTG…KAWR), 355–394 (TRIPKVVDLAVTPDGESMITVFSDKEIRILNLETKVERVI), 395–434 (SEEQPITSLSISGDGKFFIVNLSCQEIHLWDLAGEWKQPL), 438–480 (GHRQ…PLEV), and 483–523 (GHSM…KPLN).

In terms of assembly, interacts with RANBPM.

Its subcellular location is the cytoplasm. The sequence is that of WD repeat-containing protein WDS homolog from Arabidopsis thaliana (Mouse-ear cress).